Reading from the N-terminus, the 150-residue chain is Large ribosomal subunit protein bL9 (150 aa).

The protein belongs to the bacterial ribosomal protein bL9 family.

In terms of biological role, binds to the 23S rRNA. The chain is Large ribosomal subunit protein bL9 from Desulforudis audaxviator (strain MP104C).